A 379-amino-acid chain; its full sequence is Acetylajmalan esterase 1 (379 aa).

An N-terminal signal peptide occupies residues Met-1–Gly-20. The active-site Nucleophile is Ser-34. N-linked (GlcNAc...) asparagine glycosylation is found at Asn-96, Asn-178, Asn-197, and Asn-291. Catalysis depends on residues Asp-332 and His-335.

The protein belongs to the 'GDSL' lipolytic enzyme family. As to expression, expressed in roots and leaves at low levels.

It carries out the reaction 17-O-acetylnorajmaline + H2O = norajmaline + acetate + H(+). The catalysed reaction is 17-O-acetylajmaline + H2O = ajmaline + acetate + H(+). Its pathway is alkaloid biosynthesis; ajmaline biosynthesis. In terms of biological role, acetylesterase involved in the biosynthesis of ajmaline-type monoterpenoid indole alkaloids (MIAs) natural products, important plant-derived pharmaceuticals used in the therapy of heart disorders. Deacetylates 17-O-acetylnorajmaline to produce norajmaline. May also catalyze the conversion of 17-O-acetylajmaline to ajmaline. This is Acetylajmalan esterase 1 from Rauvolfia serpentina (Serpentine wood).